The chain runs to 151 residues: MPIWVDADACPKVIKEILYRAADREKVVITFVANQRLSIPASPYLRTLQVSAGFDVADNEIVQRANQDDLVITADIPLAAEVIEKGAIALNPRGERYTESTIRERLNIRDFMDTMRASGIQTGGPASLSQRDRQLFANELDKWLLQQKRKK.

The protein belongs to the UPF0178 family.

This Proteus mirabilis (strain HI4320) protein is UPF0178 protein PMI1258.